The primary structure comprises 159 residues: 17.9 kDa class II heat shock protein (159 aa).

The 115-residue stretch at 43–157 (DAKAMAATPA…PKKPRTIQVK (115 aa)) folds into the sHSP domain.

This sequence belongs to the small heat shock protein (HSP20) family.

The protein resides in the cytoplasm. The sequence is that of 17.9 kDa class II heat shock protein (HSP17.9-D) from Glycine max (Soybean).